Reading from the N-terminus, the 20-residue chain is Protein C activator (20 aa).

One can recognise a Peptidase S1 domain in the interval 1–20; it reads VVGGDECNINEHRSLALMYA.

This sequence belongs to the peptidase S1 family. Snake venom subfamily. Monomer. Glycosylated. In terms of tissue distribution, expressed by the venom gland.

The protein localises to the secreted. Its activity is regulated as follows. Inhibited by calcium. Snake venom serine protease that selectively cleaves the heavy chain of protein C (PROC). This activation is thrombomodulin-independent. The polypeptide is Protein C activator (Agkistrodon bilineatus (Cantil)).